The chain runs to 969 residues: Protein translocase subunit SecA (969 aa).

ATP contacts are provided by residues Gln99, 117 to 121 (GEGKT), and Asp631.

The protein belongs to the SecA family. As to quaternary structure, monomer and homodimer. Part of the essential Sec protein translocation apparatus which comprises SecA, SecYEG and auxiliary proteins SecDF. Other proteins may also be involved.

Its subcellular location is the cell inner membrane. The protein resides in the cytoplasm. It catalyses the reaction ATP + H2O + cellular proteinSide 1 = ADP + phosphate + cellular proteinSide 2.. Functionally, part of the Sec protein translocase complex. Interacts with the SecYEG preprotein conducting channel. Has a central role in coupling the hydrolysis of ATP to the transfer of proteins into and across the cell membrane, serving as an ATP-driven molecular motor driving the stepwise translocation of polypeptide chains across the membrane. The polypeptide is Protein translocase subunit SecA (Chlamydia trachomatis serovar L2 (strain ATCC VR-902B / DSM 19102 / 434/Bu)).